The sequence spans 403 residues: S-arrestin (403 aa).

A Phosphothreonine modification is found at T231. Residues 381 to 403 (RQNLKDTGENTEGKKDEDAGQDE) are disordered.

The protein belongs to the arrestin family. As to quaternary structure, monomer. Homodimer. Homotetramer. Interacts with RHO (via the phosphorylated C-terminus). Retina and pineal gland.

It localises to the cell projection. It is found in the cilium. The protein localises to the photoreceptor outer segment. The protein resides in the membrane. Binds to photoactivated, phosphorylated RHO and terminates RHO signaling via G-proteins by competing with G-proteins for the same binding site on RHO. May play a role in preventing light-dependent degeneration of retinal photoreceptor cells. The protein is S-arrestin (Sag) of Rattus norvegicus (Rat).